The chain runs to 265 residues: Cyclin-C (265 aa).

A Cyclin N-terminal domain is found at 48 to 151; the sequence is IQVLGEQLKL…LLENLDCCLI (104 aa).

It belongs to the cyclin family. Cyclin C subfamily. In terms of assembly, component of the Cdk8 module of the Mediator complex.

The protein resides in the nucleus. Its function is as follows. Component of the Mediator complex, a coactivator involved in regulated gene transcription of nearly all RNA polymerase II-dependent genes. Mediator functions as a bridge to convey information from gene-specific regulatory proteins to the basal RNA polymerase II transcription machinery. Mediator is recruited to promoters by direct interactions with regulatory proteins and serves as a scaffold for the assembly of a functional preinitiation complex with RNA polymerase II and the general transcription factors. Binds to and activates cyclin-dependent kinase Cdk8 that phosphorylates the CTD (C-terminal domain) of the large subunit of RNA polymerase II (RNAp II), which may inhibit the formation of a transcription initiation complex. The protein is Cyclin-C (CycC) of Aedes aegypti (Yellowfever mosquito).